Reading from the N-terminus, the 72-residue chain is MGERVRIKLYVPYQDIRDNCKRRTDFYSDFEISVDDIQYISFSELIRLVKANPEYIEQLKKVLTEWDKGESG.

This is an uncharacterized protein from Acidianus hospitalis (AFV-1).